The chain runs to 314 residues: Malate dehydrogenase (314 aa).

Residues 12–17 and Asp-36 contribute to the NAD(+) site; that span reads GSGFTG. The substrate site is built by Arg-87 and Arg-93. NAD(+)-binding positions include Asn-100 and 123–125; that span reads LTN. Asn-125 provides a ligand contact to substrate. At Ser-149 the chain carries Phosphoserine. A substrate-binding site is contributed by Arg-156. Catalysis depends on His-180, which acts as the Proton acceptor.

This sequence belongs to the LDH/MDH superfamily. MDH type 3 family.

It catalyses the reaction (S)-malate + NAD(+) = oxaloacetate + NADH + H(+). Functionally, catalyzes the reversible oxidation of malate to oxaloacetate. In Shouchella clausii (strain KSM-K16) (Alkalihalobacillus clausii), this protein is Malate dehydrogenase.